The primary structure comprises 262 residues: Acyl-[acyl-carrier-protein]--UDP-N-acetylglucosamine O-acyltransferase (262 aa).

The protein belongs to the transferase hexapeptide repeat family. LpxA subfamily. As to quaternary structure, homotrimer.

It is found in the cytoplasm. The catalysed reaction is a (3R)-hydroxyacyl-[ACP] + UDP-N-acetyl-alpha-D-glucosamine = a UDP-3-O-[(3R)-3-hydroxyacyl]-N-acetyl-alpha-D-glucosamine + holo-[ACP]. Its pathway is glycolipid biosynthesis; lipid IV(A) biosynthesis; lipid IV(A) from (3R)-3-hydroxytetradecanoyl-[acyl-carrier-protein] and UDP-N-acetyl-alpha-D-glucosamine: step 1/6. Involved in the biosynthesis of lipid A, a phosphorylated glycolipid that anchors the lipopolysaccharide to the outer membrane of the cell. This is Acyl-[acyl-carrier-protein]--UDP-N-acetylglucosamine O-acyltransferase from Burkholderia orbicola (strain MC0-3).